Reading from the N-terminus, the 149-residue chain is Large ribosomal subunit protein bL9 (149 aa).

Lys89 carries the N6-acetyllysine modification.

Belongs to the bacterial ribosomal protein bL9 family.

Its function is as follows. Binds to the 23S rRNA. This chain is Large ribosomal subunit protein bL9, found in Shigella boydii serotype 18 (strain CDC 3083-94 / BS512).